The sequence spans 1529 residues: ABC multidrug transporter AFR2 (1529 aa).

One can recognise an ABC transporter 1 domain in the interval 144–394; the sequence is GSLRDLIGNR…FVDMGFHCPS (251 aa). N-linked (GlcNAc...) asparagine glycosylation is found at Asn235 and Asn318. Transmembrane regions (helical) follow at residues 510–530, 539–559, 589–609, 614–634, and 648–668; these read LFGNFIMALIIGSVFYNLPVT, ALLFFAILMSAFGSALEILIL, IPYKVMNCIIFNLTLYFMTNL, GAYFFFMLISFTLTMVMSMLF, and LAPAALLILGLVMYTGFAVNV. A glycan (N-linked (GlcNAc...) asparagine) is linked at Asn742. A helical transmembrane segment spans residues 757–777; it reads GILIGFFLFFTAIYLTATEFI. Residues 845-1087 form the ABC transporter 2 domain; that stretch reads FSWKDVVYDI…ILIDYFEKNG (243 aa). Residue 881 to 888 participates in ATP binding; the sequence is GVSGAGKT. A run of 5 helical transmembrane segments spans residues 1193-1213, 1229-1249, 1268-1288, 1314-1334, and 1353-1373; these read YIWAKVALCSLSGLFIGFSFF, VFMMFTIFGQLTQQIMPNFVT, IFILSNIVSEIPWAILMGVII, LMFLYIEMFLLFNATFSIMIV, and MCLIFCGVLASGSSLPGFWVF. Asn1434 carries an N-linked (GlcNAc...) asparagine glycan. Residues 1465-1485 traverse the membrane as a helical segment; it reads FGLLWVYVVFNVIAAIGIYWL. Basic and acidic residues predominate over residues 1493-1505; the sequence is GKERASEPEDVQE. The interval 1493 to 1529 is disordered; it reads GKERASEPEDVQEKQVPAQSTEKKYQSISRSSESTVA. Over residues 1518–1529 the composition is skewed to polar residues; that stretch reads QSISRSSESTVA.

This sequence belongs to the ABC transporter superfamily. ABCG family. PDR (TC 3.A.1.205) subfamily.

It is found in the cell membrane. The catalysed reaction is itraconazole(in) + ATP + H2O = itraconazole(out) + ADP + phosphate + H(+). It catalyses the reaction voriconazole(in) + ATP + H2O = voriconazole(out) + ADP + phosphate + H(+). It carries out the reaction fluconazole(in) + ATP + H2O = fluconazole(out) + ADP + phosphate + H(+). Pleiotropic ABC efflux transporter that confers resistance to structurally and functionally unrelated compounds including azoles such as fluconazole (FLC), itraconazole (ITC), posaconazole (POS), and voriconazole (VRC). The polypeptide is ABC multidrug transporter AFR2 (Cryptococcus deuterogattii (strain R265) (Cryptococcus gattii VGII (strain R265))).